Consider the following 939-residue polypeptide: Isoleucine--tRNA ligase (939 aa).

The short motif at 57 to 67 is the 'HIGH' region element; it reads PYANGEIHIGH. Glutamate 563 serves as a coordination point for L-isoleucyl-5'-AMP. Positions 604–608 match the 'KMSKS' region motif; that stretch reads KMSKS. Residue lysine 607 coordinates ATP. The Zn(2+) site is built by cysteine 902, cysteine 905, cysteine 922, and cysteine 925.

It belongs to the class-I aminoacyl-tRNA synthetase family. IleS type 1 subfamily. Monomer. Requires Zn(2+) as cofactor.

The protein resides in the cytoplasm. It catalyses the reaction tRNA(Ile) + L-isoleucine + ATP = L-isoleucyl-tRNA(Ile) + AMP + diphosphate. Functionally, catalyzes the attachment of isoleucine to tRNA(Ile). As IleRS can inadvertently accommodate and process structurally similar amino acids such as valine, to avoid such errors it has two additional distinct tRNA(Ile)-dependent editing activities. One activity is designated as 'pretransfer' editing and involves the hydrolysis of activated Val-AMP. The other activity is designated 'posttransfer' editing and involves deacylation of mischarged Val-tRNA(Ile). This Methylococcus capsulatus (strain ATCC 33009 / NCIMB 11132 / Bath) protein is Isoleucine--tRNA ligase.